Reading from the N-terminus, the 632-residue chain is Arginine--tRNA ligase (632 aa).

A 'HIGH' region motif is present at residues 129 to 139; that stretch reads ANPVHPLHVGS.

It belongs to the class-I aminoacyl-tRNA synthetase family.

The protein resides in the cytoplasm. It catalyses the reaction tRNA(Arg) + L-arginine + ATP = L-arginyl-tRNA(Arg) + AMP + diphosphate. The sequence is that of Arginine--tRNA ligase from Korarchaeum cryptofilum (strain OPF8).